The primary structure comprises 174 residues: Transcriptional repressor NrdR (174 aa).

A zinc finger spans residues 3–34; sequence CPFCQHNDTRVIDSRVSEDGTTIRRRRECEAC. The ATP-cone domain occupies 49 to 139; it reads PTVVKSDGGR…VYRSFQDVAD (91 aa).

Belongs to the NrdR family. The cofactor is Zn(2+).

Functionally, negatively regulates transcription of bacterial ribonucleotide reductase nrd genes and operons by binding to NrdR-boxes. The polypeptide is Transcriptional repressor NrdR (Xanthomonas axonopodis pv. citri (strain 306)).